A 231-amino-acid chain; its full sequence is 2-C-methyl-D-erythritol 4-phosphate cytidylyltransferase (231 aa).

Belongs to the IspD/TarI cytidylyltransferase family. IspD subfamily. As to quaternary structure, homodimer.

The catalysed reaction is 2-C-methyl-D-erythritol 4-phosphate + CTP + H(+) = 4-CDP-2-C-methyl-D-erythritol + diphosphate. It functions in the pathway isoprenoid biosynthesis; isopentenyl diphosphate biosynthesis via DXP pathway; isopentenyl diphosphate from 1-deoxy-D-xylulose 5-phosphate: step 2/6. In terms of biological role, catalyzes the formation of 4-diphosphocytidyl-2-C-methyl-D-erythritol from CTP and 2-C-methyl-D-erythritol 4-phosphate (MEP). The protein is 2-C-methyl-D-erythritol 4-phosphate cytidylyltransferase of Citrobacter koseri (strain ATCC BAA-895 / CDC 4225-83 / SGSC4696).